A 219-amino-acid chain; its full sequence is uncharacterized protein (219 aa).

Belongs to the CIA30 family.

It is found in the cytoplasm. It localises to the nucleus. This is an uncharacterized protein from Schizosaccharomyces pombe (strain 972 / ATCC 24843) (Fission yeast).